The chain runs to 626 residues: L-amino-acid oxidase 4 (626 aa).

The N-terminal stretch at Lys-1–Ser-18 is a signal peptide. An N-linked (GlcNAc...) asparagine glycan is attached at Asn-54. 6 residues coordinate FAD: Gly-75, Glu-94, Ala-95, Arg-102, Met-122, and Arg-123. Position 123 (Arg-123) interacts with L-glutamate. Arg-123 contributes to the L-glutamine binding site. Arg-123 is a binding site for L-lysine. Arg-123 provides a ligand contact to L-phenylalanine. 3 N-linked (GlcNAc...) asparagine glycosylation sites follow: Asn-164, Asn-193, and Asn-331. Val-334 contacts FAD. Residue Tyr-457 coordinates L-glutamate. Tyr-457 contacts L-glutamine. Tyr-457 serves as a coordination point for L-lysine. Position 457 (Tyr-457) interacts with L-phenylalanine. Glu-551 is a binding site for FAD. Ala-558 serves as a coordination point for L-phenylalanine. Positions 559 and 560 each coordinate FAD.

It belongs to the flavin monoamine oxidase family. FIG1 subfamily. In terms of assembly, homodimer. FAD is required as a cofactor. Post-translationally, out of the 4 glycosylated residues, Asn-54 is hypermannosylated. The presence of a hypermannosylated N-glycan on Asn-54 leads to adoption of a more active conformation in the absence of acid activation.

It localises to the secreted. The catalysed reaction is an L-alpha-amino acid + O2 + H2O = a 2-oxocarboxylate + H2O2 + NH4(+). The enzyme catalyses L-lysine + O2 + H2O = 6-amino-2-oxohexanoate + H2O2 + NH4(+). It catalyses the reaction L-glutamate + O2 + H2O = H2O2 + 2-oxoglutarate + NH4(+). It carries out the reaction L-arginine + O2 + H2O = 5-guanidino-2-oxopentanoate + H2O2 + NH4(+). The catalysed reaction is L-leucine + O2 + H2O = 4-methyl-2-oxopentanoate + H2O2 + NH4(+). The enzyme catalyses L-asparagine + O2 + H2O = 2-oxosuccinamate + H2O2 + NH4(+). It catalyses the reaction L-histidine + O2 + H2O = 3-(imidazol-5-yl)pyruvate + H2O2 + NH4(+). It carries out the reaction L-isoleucine + O2 + H2O = (S)-3-methyl-2-oxopentanoate + H2O2 + NH4(+). The catalysed reaction is L-methionine + O2 + H2O = 4-methylsulfanyl-2-oxobutanoate + H2O2 + NH4(+). The enzyme catalyses L-phenylalanine + O2 + H2O = 3-phenylpyruvate + H2O2 + NH4(+). It catalyses the reaction L-tyrosine + O2 + H2O = 3-(4-hydroxyphenyl)pyruvate + H2O2 + NH4(+). It carries out the reaction L-glutamine + O2 + H2O = 2-oxoglutaramate + H2O2 + NH4(+). The catalysed reaction is L-alanine + O2 + H2O = pyruvate + H2O2 + NH4(+). LAAO4 is activated by exposure to acidic pH, the detergent sodium dodecyl sulfate, or freezing. In terms of biological role, catalyzes the oxidative deamination of L-amino acids with molecular oxygen to the corresponding alpha-keto acids and ammonia. L-glutamine shows the highest relative activity but LAAO4 has a broad substrate specificity, including L-amino acids with big aromatic, acidic and basic side chains. Methyl esters of these L-amino acids are also accepted, ethyl esters are converted but with lower activity, whereas D-Amino acids are not converted. No reaction is detected for small polar amino acids such as L-cysteine or L-aspartate, and very little for small, branched hydrophobic amino acids like L-valine. This is L-amino-acid oxidase 4 from Hebeloma cylindrosporum.